The primary structure comprises 320 residues: Lipoyl synthase (320 aa).

Residues 9–31 (ANDARPRHPEKAHRPDQPIQRKP) are disordered. Positions 12-31 (ARPRHPEKAHRPDQPIQRKP) are enriched in basic and acidic residues. 7 residues coordinate [4Fe-4S] cluster: C60, C65, C71, C86, C90, C93, and S299. The 217-residue stretch at 72-288 (WEKKHATFMI…ETTAYAKGFL (217 aa)) folds into the Radical SAM core domain.

This sequence belongs to the radical SAM superfamily. Lipoyl synthase family. [4Fe-4S] cluster is required as a cofactor.

Its subcellular location is the cytoplasm. The catalysed reaction is [[Fe-S] cluster scaffold protein carrying a second [4Fe-4S](2+) cluster] + N(6)-octanoyl-L-lysyl-[protein] + 2 oxidized [2Fe-2S]-[ferredoxin] + 2 S-adenosyl-L-methionine + 4 H(+) = [[Fe-S] cluster scaffold protein] + N(6)-[(R)-dihydrolipoyl]-L-lysyl-[protein] + 4 Fe(3+) + 2 hydrogen sulfide + 2 5'-deoxyadenosine + 2 L-methionine + 2 reduced [2Fe-2S]-[ferredoxin]. The protein operates within protein modification; protein lipoylation via endogenous pathway; protein N(6)-(lipoyl)lysine from octanoyl-[acyl-carrier-protein]: step 2/2. Functionally, catalyzes the radical-mediated insertion of two sulfur atoms into the C-6 and C-8 positions of the octanoyl moiety bound to the lipoyl domains of lipoate-dependent enzymes, thereby converting the octanoylated domains into lipoylated derivatives. The polypeptide is Lipoyl synthase (Methylobacterium nodulans (strain LMG 21967 / CNCM I-2342 / ORS 2060)).